The sequence spans 83 residues: Kunitz-type serine protease inhibitor scutellin-4 (83 aa).

The first 24 residues, 1-24, serve as a signal peptide directing secretion; sequence MSSGGLLLLLGLLTLWAELTPVSS. The BPTI/Kunitz inhibitor domain occupies 31-81; it reads CELPADSGPCRGILHAFYYHPVHRTCLGFIYGGCYGNANNFKTIDECKRTC. 3 disulfides stabilise this stretch: cysteine 31–cysteine 81, cysteine 40–cysteine 64, and cysteine 56–cysteine 77.

The protein belongs to the venom Kunitz-type family. Expressed by the venom gland.

Its subcellular location is the secreted. In terms of biological role, serine protease inhibitor. This chain is Kunitz-type serine protease inhibitor scutellin-4, found in Oxyuranus scutellatus scutellatus (Australian taipan).